We begin with the raw amino-acid sequence, 214 residues long: Adenylate kinase (214 aa).

An ATP-binding site is contributed by 10-15 (GAGKGT). The interval 30–59 (STGDMLRAAVKAGSELGKQAKAIMDAGKLV) is NMP. AMP-binding positions include T31, R36, 57–59 (KLV), 85–88 (GFPR), and Q92. Residues 122–159 (GRRVHPGSGRVYHVKFNPPQVEGKDDVTGEDLMTRKDD) form an LID region. ATP is bound by residues R123 and 132–133 (VY). AMP-binding residues include R156 and R167. Q200 provides a ligand contact to ATP.

It belongs to the adenylate kinase family. As to quaternary structure, monomer.

Its subcellular location is the cytoplasm. It carries out the reaction AMP + ATP = 2 ADP. The protein operates within purine metabolism; AMP biosynthesis via salvage pathway; AMP from ADP: step 1/1. Its function is as follows. Catalyzes the reversible transfer of the terminal phosphate group between ATP and AMP. Plays an important role in cellular energy homeostasis and in adenine nucleotide metabolism. The polypeptide is Adenylate kinase (Edwardsiella ictaluri (strain 93-146)).